The chain runs to 520 residues: MSGARTAPALFFLGCSALALGVSSASQEHREAEYYVAAVYEHPSVLSPNPLELVSRQEALELMKQNLDVYEQQVMAAAQKGVQIIVFPEDGIHGFNFTRTSIYPFLDFMPSPKLVRWNPCLEPFRFNDTEVLQRLSCMAIKGGMFLVANLGTKQPCLSSDPGCPQDGRYQFNTNVVFSDNGTLVDRYRKHNLYFEAAFDTPANVDLITFDTPFAGKFGVFTCFDILFFDPAVRLLRDFEVKHIVYPTAWMNQLPLLAAIEIQKAFATAFGVNVLAANIHHPTLGMTGSGIHTPLKSFWYHDMDDPKGHLIIAQVATNPQGLTGTGNTTSEMDPSHRKFLKILSGDPYCEKDAQEVHCDEAAKWNVNVPPTFHSEMMYDNFTLVPVWGTEGHLQVCSNSLCCHLLYERPTLSKELYALGVFDGLHTVHGTYYIQTCALVKCGGLGFDTCGQEITEAEGLFDFHLWGNFSTLYIFPLFLTSGMTLDTPDQLGWENDHYFLRKRGLSSGLVTAALYGRLYERK.

The N-terminal stretch at 1 to 21 is a signal peptide; it reads MSGARTAPALFFLGCSALALG. The region spanning 49 to 333 is the CN hydrolase domain; sequence NPLELVSRQE…TGNTTSEMDP (285 aa). Glu-89 functions as the Proton acceptor in the catalytic mechanism. Asn-96, Asn-127, and Asn-180 each carry an N-linked (GlcNAc...) asparagine glycan. Catalysis depends on Lys-189, which acts as the Proton donor. The active-site Nucleophile is Cys-222. 3 N-linked (GlcNAc...) asparagine glycosylation sites follow: Asn-326, Asn-379, and Asn-466.

Belongs to the carbon-nitrogen hydrolase superfamily. BTD/VNN family.

It localises to the secreted. The protein localises to the extracellular space. The catalysed reaction is biocytin + H2O = biotin + L-lysine. It catalyses the reaction biotin amide + H2O = biotin + NH4(+). In terms of biological role, catalytic release of biotin from biocytin, the product of biotin-dependent carboxylases degradation. The protein is Biotinidase (Btd) of Mus musculus (Mouse).